We begin with the raw amino-acid sequence, 378 residues long: Ribosomal RNA large subunit methyltransferase G (378 aa).

Belongs to the methyltransferase superfamily. RlmG family.

It localises to the cytoplasm. The enzyme catalyses guanosine(1835) in 23S rRNA + S-adenosyl-L-methionine = N(2)-methylguanosine(1835) in 23S rRNA + S-adenosyl-L-homocysteine + H(+). Specifically methylates the guanine in position 1835 (m2G1835) of 23S rRNA. This is Ribosomal RNA large subunit methyltransferase G from Shewanella sp. (strain W3-18-1).